Here is a 117-residue protein sequence, read N- to C-terminus: Glycine cleavage system H-like protein (117 aa).

In terms of domain architecture, Lipoyl-binding spans 21 to 103 (IVKLGLSSQM…ESEGWFVVLQ (83 aa)). Residue K62 is modified to N6-lipoyllysine.

The protein belongs to the GcvH family. The cofactor is (R)-lipoate.

The protein is Glycine cleavage system H-like protein of Chlamydia trachomatis serovar L2 (strain ATCC VR-902B / DSM 19102 / 434/Bu).